Reading from the N-terminus, the 204-residue chain is Protein LURP-one-related 14 (204 aa).

It belongs to the LOR family.

Its function is as follows. Might be related to the phospholipid scramblase and tubby-like superfamily of membrane tethered transcription factors. The sequence is that of Protein LURP-one-related 14 from Arabidopsis thaliana (Mouse-ear cress).